The primary structure comprises 324 residues: Polyprenol dehydrogenase (324 aa).

Tyrosine 206 acts as the Proton acceptor in catalysis. Residues tyrosine 206, lysine 210, and threonine 243 each coordinate NAD(+).

It belongs to the short-chain dehydrogenases/reductases (SDR) family.

It localises to the lipid droplet. It carries out the reaction a di-trans,poly-cis-polyprenol + NAD(+) = a di-trans,poly-cis-polyprenal + NADH + H(+). The enzyme catalyses a di-trans,poly-cis-polyprenol + NADP(+) = a di-trans,poly-cis-polyprenal + NADPH + H(+). The catalysed reaction is a di-trans,poly-cis-dolichol + NADP(+) = a di-trans,poly-cis-dolichal + NADPH + H(+). It catalyses the reaction a di-trans,poly-cis-dolichol + NAD(+) = a di-trans,poly-cis-dolichal + NADH + H(+). Its pathway is protein modification; protein glycosylation. Functionally, oxidoreductase that plays a key role in early steps of protein N-linked glycosylation by mediating two non-consecutive steps in dolichol biosynthesis. Acts both as a NAD(+)-dependent dehydrogenase and as a NADPH-dependent reductase during the conversion of polyprenol into dolichol. First catalyzes the NAD(+)-dependent dehydrogenation of polyprenol into polyprenal; polyprenal is then reduced into dolichal by srd5a3. It then catalyzes the NADPH-dependent reduction of dolichal into dolichol. This Danio rerio (Zebrafish) protein is Polyprenol dehydrogenase.